The following is a 103-amino-acid chain: N(4)-acetylcytidine amidohydrolase (103 aa).

The 96-residue stretch at 6-101 folds into the ASCH domain; sequence ITFFQRFQDD…QTQFYVIEFK (96 aa). Catalysis depends on Lys21, which acts as the Proton acceptor. The Nucleophile role is filled by Thr24. Glu74 acts as the Proton donor in catalysis.

This sequence belongs to the N(4)-acetylcytidine amidohydrolase family.

The catalysed reaction is N(4)-acetylcytidine + H2O = cytidine + acetate + H(+). The enzyme catalyses N(4)-acetyl-2'-deoxycytidine + H2O = 2'-deoxycytidine + acetate + H(+). It carries out the reaction N(4)-acetylcytosine + H2O = cytosine + acetate + H(+). Catalyzes the hydrolysis of N(4)-acetylcytidine (ac4C). The sequence is that of N(4)-acetylcytidine amidohydrolase (yqfB) from Escherichia coli O8 (strain IAI1).